Here is a 229-residue protein sequence, read N- to C-terminus: Meiotically up-regulated gene 31 protein (229 aa).

Disordered stretches follow at residues 16–68 (EDSA…EEDK) and 189–229 (GLPE…TTWA).

It localises to the endoplasmic reticulum. Functionally, has a role in meiosis. The protein is Meiotically up-regulated gene 31 protein (mug31) of Schizosaccharomyces pombe (strain 972 / ATCC 24843) (Fission yeast).